Here is a 119-residue protein sequence, read N- to C-terminus: Large ribosomal subunit protein eL8 (119 aa).

This sequence belongs to the eukaryotic ribosomal protein eL8 family. In terms of assembly, part of the 50S ribosomal subunit. Probably part of the RNase P complex.

It is found in the cytoplasm. In terms of biological role, multifunctional RNA-binding protein that recognizes the K-turn motif in ribosomal RNA, the RNA component of RNase P, box H/ACA, box C/D and box C'/D' sRNAs. This Archaeoglobus fulgidus (strain ATCC 49558 / DSM 4304 / JCM 9628 / NBRC 100126 / VC-16) protein is Large ribosomal subunit protein eL8.